Here is a 156-residue protein sequence, read N- to C-terminus: METYLPFVDDAAVDQAFEAWVDELVEEECGAMPSEGYHPEVPRVMAAKGRDAESGGIDLARYNDAGDVRLLKIVDSYLRHAEITLRELISKTIVNQWVISNDCQQSASGVMQAGIDKLQGQLDALEKYRRDVQVRYRRTHPDTVDASCMRLRDMYI.

Associated with the spliceosome.

It is found in the nucleus. In terms of biological role, involved in pre-mRNA splicing. The sequence is that of Pre-mRNA-splicing factor SNT309 (SNT309) from Candida glabrata (strain ATCC 2001 / BCRC 20586 / JCM 3761 / NBRC 0622 / NRRL Y-65 / CBS 138) (Yeast).